We begin with the raw amino-acid sequence, 470 residues long: UDP-N-acetylmuramate--L-alanine ligase (470 aa).

118–124 is a binding site for ATP; that stretch reads GTHGKTT.

This sequence belongs to the MurCDEF family.

It localises to the cytoplasm. The catalysed reaction is UDP-N-acetyl-alpha-D-muramate + L-alanine + ATP = UDP-N-acetyl-alpha-D-muramoyl-L-alanine + ADP + phosphate + H(+). Its pathway is cell wall biogenesis; peptidoglycan biosynthesis. Cell wall formation. The sequence is that of UDP-N-acetylmuramate--L-alanine ligase from Cereibacter sphaeroides (strain ATCC 17029 / ATH 2.4.9) (Rhodobacter sphaeroides).